A 536-amino-acid polypeptide reads, in one-letter code: Membrane protein insertase YidC (536 aa).

The helical transmembrane segment at I14–P34 threads the bilayer. The tract at residues S43–V69 is disordered. Residues A53–S68 show a composition bias toward polar residues. 5 consecutive transmembrane segments (helical) span residues V312–L332, W339–Y359, G401–I421, W436–M456, and P484–V504.

This sequence belongs to the OXA1/ALB3/YidC family. Type 1 subfamily. As to quaternary structure, interacts with the Sec translocase complex via SecD. Specifically interacts with transmembrane segments of nascent integral membrane proteins during membrane integration.

The protein resides in the cell inner membrane. In terms of biological role, required for the insertion and/or proper folding and/or complex formation of integral membrane proteins into the membrane. Involved in integration of membrane proteins that insert both dependently and independently of the Sec translocase complex, as well as at least some lipoproteins. Aids folding of multispanning membrane proteins. This Wolinella succinogenes (strain ATCC 29543 / DSM 1740 / CCUG 13145 / JCM 31913 / LMG 7466 / NCTC 11488 / FDC 602W) (Vibrio succinogenes) protein is Membrane protein insertase YidC.